The chain runs to 309 residues: Homoserine kinase (309 aa).

An ATP-binding site is contributed by 91–101 (PIGSGLGSSAC).

Belongs to the GHMP kinase family. Homoserine kinase subfamily.

It is found in the cytoplasm. It catalyses the reaction L-homoserine + ATP = O-phospho-L-homoserine + ADP + H(+). The protein operates within amino-acid biosynthesis; L-threonine biosynthesis; L-threonine from L-aspartate: step 4/5. In terms of biological role, catalyzes the ATP-dependent phosphorylation of L-homoserine to L-homoserine phosphate. The chain is Homoserine kinase from Serratia proteamaculans (strain 568).